Reading from the N-terminus, the 570-residue chain is Pre-mRNA 3'-end-processing factor FIP1 (570 aa).

Residues 1-10 are compositionally biased toward basic and acidic residues; that stretch reads MSAEEADKTT. Positions 1 to 107 are disordered; sequence MSAEEADKTT…SDDDDDDVRV (107 aa). Residues 16 to 38 show a composition bias toward acidic residues; sequence AGDEEEEWLYGDEGESKETEEEE. The span at 56-77 shows a compositional bias: low complexity; sequence DAPTTTNNSSDSATPPTTTTTT. A compositionally biased stretch (acidic residues) spans 87 to 104; sequence APGEDEDSESDSDDDDDD. T125 is subject to Phosphothreonine. At S247 the chain carries Phosphoserine. Disordered stretches follow at residues 300-328, 371-400, and 418-570; these read RRRH…VQKM, PNFP…YDGR, and GAVN…EAME. The span at 371–384 shows a compositional bias: pro residues; the sequence is PNFPPPTGGPPPSL. Composition is skewed to basic and acidic residues over residues 436-462 and 476-506; these read YPRR…RDHS and DEER…EERH. Composition is skewed to basic residues over residues 520-529 and 538-548; these read KSSRSSSRRR and HRRHKHKKSKR. Basic and acidic residues predominate over residues 549–562; that stretch reads SKEGKEPSEERSAD.

It belongs to the FIP1 family.

It localises to the nucleus. Its function is as follows. Involved in mRNA processing. This chain is Pre-mRNA 3'-end-processing factor FIP1 (fip1l1), found in Danio rerio (Zebrafish).